The following is a 552-amino-acid chain: Urocanate hydratase (552 aa).

NAD(+) contacts are provided by residues G49–G50, Q127, G173–G175, D193, N239–A240, Q260–H264, Y270–V271, and Y319. C407 is an active-site residue. G489 provides a ligand contact to NAD(+).

Belongs to the urocanase family. NAD(+) is required as a cofactor.

It is found in the cytoplasm. It carries out the reaction 4-imidazolone-5-propanoate = trans-urocanate + H2O. The protein operates within amino-acid degradation; L-histidine degradation into L-glutamate; N-formimidoyl-L-glutamate from L-histidine: step 2/3. In terms of biological role, catalyzes the conversion of urocanate to 4-imidazolone-5-propionate. The sequence is that of Urocanate hydratase from Bacillus cytotoxicus (strain DSM 22905 / CIP 110041 / 391-98 / NVH 391-98).